Here is a 160-residue protein sequence, read N- to C-terminus: Protransforming growth factor alpha (160 aa).

Positions 1–23 (MVPSAGQLALFALGIVLAACQAL) are cleaved as a signal peptide. The propeptide at 24-39 (ENSTSPLSADPPVAAA) is removed in mature form. Residues 24-98 (ENSTSPLSAD…AVVAASQKKQ (75 aa)) are Extracellular-facing. An N-linked (GlcNAc...) asparagine glycan is attached at Asn25. The region spanning 43-83 (HFNDCPDSHTQFCFHGTCRFLVQEDKPACVCHSGYVGARCE) is the EGF-like domain. 3 disulfides stabilise this stretch: Cys47–Cys60, Cys55–Cys71, and Cys73–Cys82. The propeptide at 90-160 (VVAASQKKQA…TACCHSETVV (71 aa)) is removed in mature form. Residues 99-124 (AITALVVVSIVALAVLIITCVLIHCC) traverse the membrane as a helical segment. At 125–160 (QVRKHCEWCRALICRHEKPSALLKGRTACCHSETVV) the chain is on the cytoplasmic side. S-palmitoyl cysteine attachment occurs at residues Cys153 and Cys154.

As to quaternary structure, interacts with the PDZ domains of MAGI3, SDCBP and SNTA1. The interaction with SDCBP, is required for the targeting to the cell surface. In the endoplasmic reticulum, in its immature form (i.e. with a prosegment and lacking full N-glycosylation), interacts with CNIH. In the Golgi apparatus, may form a complex with CNIH and GORASP2. Interacts (via cytoplasmic C-terminal domain) with NKD2. In terms of tissue distribution, isoform 1, isoform 3 and isoform 4 are expressed in keratinocytes and tumor-derived cell lines.

The protein localises to the secreted. It localises to the extracellular space. The protein resides in the cell membrane. Its function is as follows. TGF alpha is a mitogenic polypeptide that is able to bind to the EGF receptor/EGFR and to act synergistically with TGF beta to promote anchorage-independent cell proliferation in soft agar. In Homo sapiens (Human), this protein is Protransforming growth factor alpha (TGFA).